Reading from the N-terminus, the 56-residue chain is MAACRCCDTSPGITLFPYFAILILILAILVVGTPNQQYHHSPSTYEYKTQHISIAK.

The helical transmembrane segment at 12–32 threads the bilayer; the sequence is GITLFPYFAILILILAILVVG. The tract at residues 19-31 is hydrophobic; the sequence is FAILILILAILVV.

The protein resides in the membrane. This is an uncharacterized protein from Chenopodium amaranticolor (Quinoa).